The primary structure comprises 393 residues: Putative odorant receptor 69a, isoform B (393 aa).

Topologically, residues 1 to 39 (MQLEDFMRYPDLVCQAAQLPRYTWNGRRSLEVKRNLAKR) are cytoplasmic. The chain crosses the membrane as a helical span at residues 40–60 (IIFWLGAVNLVYHNIGCVMYG). Residues 61–69 (YFGDGRTKD) are Extracellular-facing. A helical transmembrane segment spans residues 70–90 (PIAYLAELASVASMLGFTIVG). At 91–138 (TLNLWKMLSLKTHFENLLNEFEELFQLIKHRAYRIHHYQEKYTRHIRN) the chain is on the cytoplasmic side. Residues 139 to 159 (TFIFHTSAVVYYNSLPILLMI) form a helical membrane-spanning segment. Residues 160 to 208 (REHFSNSQQLGYRIQSNTWYPWQVQGSIPGFFAAVACQIFSCQTNMCVN) lie on the Extracellular side of the membrane. Residues 209–229 (MFIQFLINFFGIQLEIHFDGL) form a helical membrane-spanning segment. Topologically, residues 230–269 (ARQLETIDARNPHAKDQLKYLIVYHTKLLNLADRVNRSFN) are cytoplasmic. Residues 270–290 (FTFLISLSVSMISNCFLAFSM) form a helical membrane-spanning segment. Over 291-305 (TMFDFGTSLKHLLGL) the chain is Extracellular. Residues 306-326 (LLFITYNFSMCRSGTHLILTS) form a helical membrane-spanning segment. Residues 327–365 (GKVLPAAFYNNWYEGDLVYRRMLLILMMRATKPYMWKTY) are Cytoplasmic-facing. A helical transmembrane segment spans residues 366-386 (KLAPVSITTYMATLKFSYQMF). Over 387 to 393 (TCVRSLK) the chain is Extracellular.

This sequence belongs to the insect chemoreceptor superfamily. Heteromeric odorant receptor channel (TC 1.A.69) family. Or49a subfamily. In terms of assembly, interacts with Orco. Complexes exist early in the endomembrane system in olfactory sensory neurons (OSNs), coupling these complexes to the conserved ciliary trafficking pathway. As to expression, expressed in olfactory sensory neurons in the antenna.

The protein localises to the cell membrane. Its function is as follows. Odorant receptor which mediates acceptance or avoidance behavior, depending on its substrates. The odorant receptor repertoire encodes a large collection of odor stimuli that vary widely in identity, intensity, and duration. May form a complex with Orco to form odorant-sensing units, providing sensitive and prolonged odorant signaling and calcium permeability. This is Putative odorant receptor 69a, isoform B (Or69a) from Drosophila melanogaster (Fruit fly).